Here is a 559-residue protein sequence, read N- to C-terminus: Potassium-transporting ATPase potassium-binding subunit (559 aa).

Helical transmembrane passes span 5 to 25, 63 to 83, 131 to 151, 173 to 193, 254 to 274, 282 to 302, 327 to 347, 356 to 376, 379 to 399, 416 to 436, 483 to 503, and 525 to 545; these read GFLL…PLGT, LLAI…LLML, VGLT…VFAL, ITLW…IQQG, VQML…GEVV, AILW…MWAE, FGIL…CGAV, ALGG…FGGV, GLYG…LMVG, MIAL…ALAM, LLLA…VMAI, and ALFI…TFIP.

The protein belongs to the KdpA family. The system is composed of three essential subunits: KdpA, KdpB and KdpC.

It is found in the cell inner membrane. Functionally, part of the high-affinity ATP-driven potassium transport (or Kdp) system, which catalyzes the hydrolysis of ATP coupled with the electrogenic transport of potassium into the cytoplasm. This subunit binds the periplasmic potassium ions and delivers the ions to the membrane domain of KdpB through an intramembrane tunnel. The polypeptide is Potassium-transporting ATPase potassium-binding subunit (Klebsiella pneumoniae (strain 342)).